Reading from the N-terminus, the 205-residue chain is Protein DEPP1 (205 aa).

Composition is skewed to polar residues over residues Asp-55–Asn-64 and Gly-83–Thr-101. A disordered region spans residues Asp-55–Trp-171. A compositionally biased stretch (basic and acidic residues) spans Met-138–Leu-155.

The protein localises to the cytoplasm. The protein resides in the peroxisome. It is found in the mitochondrion. In terms of biological role, acts as a critical modulator of FOXO3-induced autophagy via increased cellular ROS. The chain is Protein DEPP1 (Depp1) from Mus musculus (Mouse).